The following is a 342-amino-acid chain: MGEIDMNEDVYVLGIETSCDETAAAVVKNGKEIVSNVVASQMESHRRFGGVVPEIASRHHVEQITLVIEEAMQRAGVSFSNLDAVAVTAGPGLVGALLVGVNAAKALAFAHGLPLVGVHHIAGHIYANQLVAEMKFPLLALVVSGGHTELIYMEEHGKFTVIGETRDDAAGEAYDKVARALGLPYPGGPHIDRLAHEGEPVIDLPRAWLEEGSYDFSFSGLKSAVLNTLHNAKQRGEEIDPKHMAASFQESVVDVLVTKTVQAAKQYRVRQVLLAGGVAANRGLRSALQDKMKELPGVELVIPPLSLCTDNAAMIAAAGTVLYWQGKRSDLALNANPGLPLV.

H120 and H124 together coordinate Fe cation. Residues 142-146, D175, G188, D192, and N281 contribute to the substrate site; that span reads VVSGG. D310 is a Fe cation binding site.

This sequence belongs to the KAE1 / TsaD family. Fe(2+) is required as a cofactor.

Its subcellular location is the cytoplasm. The catalysed reaction is L-threonylcarbamoyladenylate + adenosine(37) in tRNA = N(6)-L-threonylcarbamoyladenosine(37) in tRNA + AMP + H(+). Functionally, required for the formation of a threonylcarbamoyl group on adenosine at position 37 (t(6)A37) in tRNAs that read codons beginning with adenine. Is involved in the transfer of the threonylcarbamoyl moiety of threonylcarbamoyl-AMP (TC-AMP) to the N6 group of A37, together with TsaE and TsaB. TsaD likely plays a direct catalytic role in this reaction. The chain is tRNA N6-adenosine threonylcarbamoyltransferase from Geobacillus thermodenitrificans (strain NG80-2).